The sequence spans 408 residues: Phosphoglycerate kinase (408 aa).

Substrate is bound by residues 22–24 (DIN), Arg39, 60–63 (HQSR), Arg117, and Arg157. ATP contacts are provided by residues Glu332 and 358 to 361 (GGHT).

This sequence belongs to the phosphoglycerate kinase family. As to quaternary structure, monomer.

It localises to the cytoplasm. It catalyses the reaction (2R)-3-phosphoglycerate + ATP = (2R)-3-phospho-glyceroyl phosphate + ADP. It participates in carbohydrate degradation; glycolysis; pyruvate from D-glyceraldehyde 3-phosphate: step 2/5. This chain is Phosphoglycerate kinase (pgk), found in Thermoplasma acidophilum (strain ATCC 25905 / DSM 1728 / JCM 9062 / NBRC 15155 / AMRC-C165).